Reading from the N-terminus, the 485-residue chain is MEKQVRVRYAPSPTGHLHIGNARTALFNYLFARHLDGKFIIRIEDTDVKRNVAGGEESQLKYLKWLGMDWDEGVDVGGEFGPYRQTERLDIYKKLYEDLLERGLAYKCYMTEEELEAEREGQIARGETPRYACNHRELTEEQVKEFEAEGRIPSIRFRVPANRDYTFKDIVKDEVAFHSNDFGDFVIVKKDGIPTYNFAVAVDDHLMEITHVLRGDDHISNTPKQMMIYEAFGWDIPQFGHMTLIVNESRKKLSKRDESIIQFIEQYKELGYLPEAIFNFIALLGWSPVGEEEIFSKDEFIKMFDAARLSKSPALFDSQKLKWMNNQYMKKQDLDTVVELSLPHLVKAGRVGETLSEQDQAWIRDVIALYHEQMSFGAEIVELSEMFFKDHVDYEEEGQEVLNGEQVPEVLRAFAGQIEALEVMEPAAIKAAIKAVQKETGHKGKNLFMPIRVATTGQTHGPELPNAIALLGKEKVLNRLQKVIG.

Residues 11–21 (PSPTGHLHIGN) carry the 'HIGH' region motif. The 'KMSKS' region signature appears at 252-256 (KLSKR). Lys255 contributes to the ATP binding site.

Belongs to the class-I aminoacyl-tRNA synthetase family. Glutamate--tRNA ligase type 1 subfamily. As to quaternary structure, monomer.

The protein localises to the cytoplasm. The enzyme catalyses tRNA(Glu) + L-glutamate + ATP = L-glutamyl-tRNA(Glu) + AMP + diphosphate. Its function is as follows. Catalyzes the attachment of glutamate to tRNA(Glu) in a two-step reaction: glutamate is first activated by ATP to form Glu-AMP and then transferred to the acceptor end of tRNA(Glu). In Bacillus cereus (strain ATCC 14579 / DSM 31 / CCUG 7414 / JCM 2152 / NBRC 15305 / NCIMB 9373 / NCTC 2599 / NRRL B-3711), this protein is Glutamate--tRNA ligase.